The sequence spans 374 residues: 5-aminosalicylate 1,2-dioxygenase (374 aa).

Belongs to the gentisate 1,2-dioxygenase family. The cofactor is Fe(2+).

The catalysed reaction is 5-amino-2-hydroxybenzoate + O2 = (2Z,4E)-4-amino-6-oxohepta-2,4-dienedioate + H(+). Inhibited by SDS and o-phenanthroline, a ferrous iron chelator. Partially inhibited by EDTA. Functionally, involved in the biodegradation of 3-aminobenzoate. Catalyzes the cleavage of the 5-aminosalicylate (5ASA) aromatic ring to form 4-amino-6-oxohepta-2,4-dienedioate (cis-ACOHDA). Can also convert gentisate, but the catalytic efficiency with 5ASA is 70-fold higher. The chain is 5-aminosalicylate 1,2-dioxygenase from Comamonas sp.